A 372-amino-acid polypeptide reads, in one-letter code: Alanine dehydrogenase 1 (372 aa).

H94 is a catalytic residue. 170–200 (TYVIFGGGVAATNAANVALGLNAKVIIIELN) contributes to the NAD(+) binding site.

This sequence belongs to the AlaDH/PNT family.

It catalyses the reaction L-alanine + NAD(+) + H2O = pyruvate + NH4(+) + NADH + H(+). It functions in the pathway amino-acid degradation; L-alanine degradation via dehydrogenase pathway; NH(3) and pyruvate from L-alanine: step 1/1. Functionally, may play a role in cell wall synthesis as L-alanine is an important constituent of the peptidoglycan layer. The sequence is that of Alanine dehydrogenase 1 (ald1) from Staphylococcus aureus (strain MSSA476).